A 446-amino-acid chain; its full sequence is Packaging protein 1 (446 aa).

The interval 1 to 72 (MEEKAGLRHL…SQVSKSKKQR (72 aa)) is disordered. Positions 10-21 (LQNQQNEPSQDP) are enriched in polar residues. The segment covering 32-43 (HSDRNHLNKEAE) has biased composition (basic and acidic residues). An ATP-binding site is contributed by 170–177 (GPTGCGKS). The segment at 439–446 (RYYHSKKK) is DNA-binding.

It belongs to the adenoviridae packaging protein 1 family. Homodimer. Part of a genome packaging complex composed of packaging proteins 1, 2 and 3; this complex specifically binds to the packaging sequence on the left end of viral genomic DNA and performs packaging of the viral genome. Interacts with protein 33K.

Its subcellular location is the virion. The protein resides in the host nucleus. The protein localises to the host nucleoplasm. It is found in the host nucleolus. In terms of biological role, component of the packaging machinery which encapsidates the viral DNA into preformed capsids and transcriptional activator of the viral major late promoter (MLP). Binds, along with packaging proteins 2 and 3, to the specific packaging sequence on the left end of viral genomic DNA and displays ATPase activity thereby providing the power stroke of the packaging machinery. The activity of packaging protein IVa2 is stimulated by protein 33K which acts as a terminase. May be the protein that pumps DNA into the capsid powered by ATP hydrolysis. Specifically binds to the 5'-CG-3' nucleotides of the repeats making up the packaging sequence. Component of the DEF-A and DEF-B transcription factors that bind downstream elements of the major late promoter (MLP), and stimulate transcription from the MLP after initiation of viral DNA replication. DEF-A is a heterodimer packaging proteins 1 and 2 and DEF-B is a homodimer of packaging protein 1. The sequence is that of Packaging protein 1 from Canine adenovirus serotype 1 (strain CLL) (CAdV-1).